The primary structure comprises 501 residues: Glucans biosynthesis protein G (501 aa).

The signal sequence occupies residues 1–24 (MNRRQVLAALAAIPLLPEAFPANA).

The protein belongs to the OpgD/OpgG family.

It is found in the periplasm. Its pathway is glycan metabolism; osmoregulated periplasmic glucan (OPG) biosynthesis. In terms of biological role, involved in the biosynthesis of osmoregulated periplasmic glucans (OPGs). The sequence is that of Glucans biosynthesis protein G from Rhodopseudomonas palustris (strain BisA53).